A 474-amino-acid polypeptide reads, in one-letter code: Trehalose-6-phosphate synthase (474 aa).

D-glucose 6-phosphate is bound at residue R10. 22 to 23 contacts UDP-alpha-D-glucose; it reads GG. D-glucose 6-phosphate is bound by residues Y77 and D131. UDP-alpha-D-glucose-binding residues include R263 and K268. Residue R301 coordinates D-glucose 6-phosphate. Residues F340 and 366 to 370 contribute to the UDP-alpha-D-glucose site; that span reads LVAKE.

This sequence belongs to the glycosyltransferase 20 family. In terms of assembly, homotetramer.

The enzyme catalyses D-glucose 6-phosphate + UDP-alpha-D-glucose = alpha,alpha-trehalose 6-phosphate + UDP + H(+). Its pathway is glycan biosynthesis; trehalose biosynthesis. Its function is as follows. Probably involved in the osmoprotection via the biosynthesis of trehalose. Catalyzes the transfer of glucose from UDP-alpha-D-glucose (UDP-Glc) to D-glucose 6-phosphate (Glc-6-P) to form trehalose-6-phosphate. Acts with retention of the anomeric configuration of the UDP-sugar donor. The protein is Trehalose-6-phosphate synthase of Cronobacter sakazakii (strain ATCC BAA-894) (Enterobacter sakazakii).